A 302-amino-acid chain; its full sequence is MTLSASLSPQPFGRIVTAMVTPFDSSGAVDFQLAARLARHLVEQGSDGLLVCGTTGESPTLSWDEQLKLLEAVREAVGSSAQVLAGTGSNSTSEAVKATREAAAVGADGALVVVPYYNKPPQEGLEVHFRAIAEAAPTLPLMLYNIPGRTGCHIEAETVACLMDCPNIVSFKAASGTTEEVTALRLACGSRLAIYSGDDGLTLPMLSVGAVGVVSVASHVAGPQIRAMIDAYVEGEVGAALAQHEQLIPLFKALFATTNPIPVKAALEINGWSVGAPRPPLSSLPEAMRTTLSNTLSALRQT.

Position 55 (T55) interacts with pyruvate. Catalysis depends on Y144, which acts as the Proton donor/acceptor. Residue K172 is the Schiff-base intermediate with substrate of the active site. V214 provides a ligand contact to pyruvate.

It belongs to the DapA family. In terms of assembly, homotetramer; dimer of dimers.

Its subcellular location is the cytoplasm. The catalysed reaction is L-aspartate 4-semialdehyde + pyruvate = (2S,4S)-4-hydroxy-2,3,4,5-tetrahydrodipicolinate + H2O + H(+). It participates in amino-acid biosynthesis; L-lysine biosynthesis via DAP pathway; (S)-tetrahydrodipicolinate from L-aspartate: step 3/4. Its function is as follows. Catalyzes the condensation of (S)-aspartate-beta-semialdehyde [(S)-ASA] and pyruvate to 4-hydroxy-tetrahydrodipicolinate (HTPA). This is 4-hydroxy-tetrahydrodipicolinate synthase from Synechococcus sp. (strain CC9902).